The sequence spans 299 residues: Inactive recombination-promoting nuclease-like protein RpnE (299 aa).

Belongs to the Rpn/YhgA-like nuclease family.

Its function is as follows. Upon expression has no effect on RecA-independent DNA recombination, cell viability or DNA damage. In Escherichia coli (strain K12), this protein is Inactive recombination-promoting nuclease-like protein RpnE (yfaD).